An 896-amino-acid chain; its full sequence is Translation initiation factor IF-2 (896 aa).

Over residues 93–219 (VKRDPQEAER…RMAEENEKNW (127 aa)) the composition is skewed to basic and acidic residues. The disordered stretch occupies residues 93–307 (VKRDPQEAER…GSALQQGFQK (215 aa)). Positions 256 to 271 (GRSRSSKAARPAKKGN) are enriched in basic residues. Residues 272–285 (KHAESKADREEARA) are compositionally biased toward basic and acidic residues. Positions 395–564 (PRAPVVTIMG…LLQAEVLELK (170 aa)) constitute a tr-type G domain. Residues 404-411 (GHVDHGKT) are G1. 404-411 (GHVDHGKT) is a GTP binding site. The tract at residues 429–433 (GITQH) is G2. A G3 region spans residues 450–453 (DTPG). Residues 450 to 454 (DTPGH) and 504 to 507 (NKID) each bind GTP. The interval 504–507 (NKID) is G4. The segment at 540 to 542 (SAK) is G5.

Belongs to the TRAFAC class translation factor GTPase superfamily. Classic translation factor GTPase family. IF-2 subfamily.

The protein localises to the cytoplasm. In terms of biological role, one of the essential components for the initiation of protein synthesis. Protects formylmethionyl-tRNA from spontaneous hydrolysis and promotes its binding to the 30S ribosomal subunits. Also involved in the hydrolysis of GTP during the formation of the 70S ribosomal complex. The sequence is that of Translation initiation factor IF-2 from Klebsiella pneumoniae (strain 342).